The primary structure comprises 118 residues: MTETTENVVITIPDKTSFTFHEAATSPSEGEEFVVGHFRELTVKISGSSTSREIKFYAVDENGEKTALSGTNKTDFQLGSSTLNTNEYWDFDIAGLFKVMFEVVSVTGDVTVKGIVVS.

The polypeptide is SPbeta prophage-derived uncharacterized protein YomS (yomS) (Bacillus subtilis (strain 168)).